We begin with the raw amino-acid sequence, 187 residues long: Adenylate kinase (187 aa).

Residue 12-17 (GAGKGT) participates in ATP binding. Residues 32-61 (STGDIFRANLAENTELGQKARQFMDAGDLV) are NMP. Residues Thr-33, Arg-38, 59 to 61 (DLV), 87 to 90 (GYPR), and Gln-94 contribute to the AMP site. Residues 128 to 134 (GRGRADD) form an LID region. Arg-129 is a binding site for ATP. 2 residues coordinate AMP: Arg-131 and Arg-142. ATP is bound at residue Arg-170.

This sequence belongs to the adenylate kinase family. Monomer.

The protein resides in the cytoplasm. It catalyses the reaction AMP + ATP = 2 ADP. The protein operates within purine metabolism; AMP biosynthesis via salvage pathway; AMP from ADP: step 1/1. Functionally, catalyzes the reversible transfer of the terminal phosphate group between ATP and AMP. Plays an important role in cellular energy homeostasis and in adenine nucleotide metabolism. The chain is Adenylate kinase from Leuconostoc mesenteroides subsp. mesenteroides (strain ATCC 8293 / DSM 20343 / BCRC 11652 / CCM 1803 / JCM 6124 / NCDO 523 / NBRC 100496 / NCIMB 8023 / NCTC 12954 / NRRL B-1118 / 37Y).